Consider the following 497-residue polypeptide: Signal recognition particle subunit SRP54 2 (497 aa).

Residues 1-297 (MVLAELGGRI…DAKPFVSRLL (297 aa)) are G-domain. GTP-binding positions include 108–117 (GLQGEVLEKP), 192–196 (DTSGR), and 250–253 (TKMD). An M-domain region spans residues 298 to 497 (GNGDMSGFVN…LMGMFGGRDE (200 aa)).

The protein belongs to the GTP-binding SRP family. SRP54 subfamily. In terms of assembly, component of a signal recognition particle (SRP) complex that consists of a 7SL RNA molecule of 300 nucleotides and six protein subunits: SRP72, SRP68, SRP54, SRP19, SRP14 and SRP9.

The protein resides in the cytoplasm. It is found in the endoplasmic reticulum. The enzyme catalyses GTP + H2O = GDP + phosphate + H(+). In terms of biological role, component of the signal recognition particle (SRP) complex, a ribonucleoprotein complex that mediates the cotranslational targeting of secretory and membrane proteins to the endoplasmic reticulum (ER). As part of the SRP complex, associates with the SRP receptor (SR) component SRPRA to target secretory proteins to the endoplasmic reticulum membrane. Binds to the signal sequence of presecretory proteins when they emerge from the ribosomes. Displays basal GTPase activity, and stimulates reciprocal GTPase activation of the SR subunit SRPRA. Forms a guanosine 5'-triphosphate (GTP)-dependent complex with the SR subunit SRPRA. SR compaction and GTPase mediated rearrangement of SR drive SRP-mediated cotranslational protein translocation into the ER. Requires the presence of SRP9/SRP14 and/or SRP19 to stably interact with RNA. The sequence is that of Signal recognition particle subunit SRP54 2 (SRP-54B) from Arabidopsis thaliana (Mouse-ear cress).